Consider the following 177-residue polypeptide: ATP synthase subunit delta (177 aa).

The protein belongs to the ATPase delta chain family. In terms of assembly, F-type ATPases have 2 components, F(1) - the catalytic core - and F(0) - the membrane proton channel. F(1) has five subunits: alpha(3), beta(3), gamma(1), delta(1), epsilon(1). F(0) has three main subunits: a(1), b(2) and c(10-14). The alpha and beta chains form an alternating ring which encloses part of the gamma chain. F(1) is attached to F(0) by a central stalk formed by the gamma and epsilon chains, while a peripheral stalk is formed by the delta and b chains.

The protein resides in the cell inner membrane. In terms of biological role, f(1)F(0) ATP synthase produces ATP from ADP in the presence of a proton or sodium gradient. F-type ATPases consist of two structural domains, F(1) containing the extramembraneous catalytic core and F(0) containing the membrane proton channel, linked together by a central stalk and a peripheral stalk. During catalysis, ATP synthesis in the catalytic domain of F(1) is coupled via a rotary mechanism of the central stalk subunits to proton translocation. Functionally, this protein is part of the stalk that links CF(0) to CF(1). It either transmits conformational changes from CF(0) to CF(1) or is implicated in proton conduction. The protein is ATP synthase subunit delta of Idiomarina loihiensis (strain ATCC BAA-735 / DSM 15497 / L2-TR).